The chain runs to 291 residues: Beta-lactamase CTX-M-8 (291 aa).

The signal sequence occupies residues M1–A30. The Nucleophile; acyl-ester intermediate role is filled by S73. Residues K76, S133, E169, and S240 each coordinate a beta-lactam.

The protein belongs to the class-A beta-lactamase family. In terms of assembly, monomer.

The protein localises to the secreted. It catalyses the reaction a beta-lactam + H2O = a substituted beta-amino acid. Inhibited by the beta-lactamase-blocking agents clavulanic acid, tazobactam and sulbactam; in the DH5alpha strain of E.coli. Functionally, extended-spectrum beta-lactamase (ESBL) which confers resistance to penicillins, as well as first, third and fourth-generation cephalosporins. Has cefotaxime-hydrolyzing activity. Inactive against cephalosporin antibiotic, cefoxitin, and the carbapenem, imipenem. The polypeptide is Beta-lactamase CTX-M-8 (Citrobacter amalonaticus).